A 428-amino-acid chain; its full sequence is Adenylosuccinate synthetase (428 aa).

GTP is bound by residues 12-18 (GDEGKGK) and 40-42 (GHT). The active-site Proton acceptor is the Asp-13. Mg(2+) is bound by residues Asp-13 and Gly-40. IMP is bound by residues 13-16 (DEGK), 38-41 (NAGH), Thr-128, Arg-142, Gln-223, Thr-238, and Arg-302. The active-site Proton donor is His-41. A substrate-binding site is contributed by 298 to 304 (TTTGRPR). GTP is bound by residues Arg-304, 330–332 (KLD), and 412–414 (GVG).

This sequence belongs to the adenylosuccinate synthetase family. Homodimer. The cofactor is Mg(2+).

It is found in the cytoplasm. It carries out the reaction IMP + L-aspartate + GTP = N(6)-(1,2-dicarboxyethyl)-AMP + GDP + phosphate + 2 H(+). It functions in the pathway purine metabolism; AMP biosynthesis via de novo pathway; AMP from IMP: step 1/2. Functionally, plays an important role in the de novo pathway of purine nucleotide biosynthesis. Catalyzes the first committed step in the biosynthesis of AMP from IMP. This Kineococcus radiotolerans (strain ATCC BAA-149 / DSM 14245 / SRS30216) protein is Adenylosuccinate synthetase.